A 1117-amino-acid chain; its full sequence is Protein rliB (1117 aa).

The N-terminal stretch at 1–23 is a signal peptide; that stretch reads MKNINNKILKIFILFLAICSVKS. Asn136, Asn195, Asn279, and Asn318 each carry an N-linked (GlcNAc...) asparagine glycan. A G8 domain is found at 266–392; it reads STWSNNLVPQ…YHNSWTKLAS (127 aa). PbH1 repeat units follow at residues 522 to 544 and 545 to 567; these read VQKSYISDCVVTKSYYRCYTIHG and TNNLTLTRNVAFDVNGHCYYLED. N-linked (GlcNAc...) asparagine glycans are attached at residues Asn547 and Asn605. A PbH1 3 repeat occupies 621-642; sequence NAYNTIIGNSASGGWAGFSFPN. Asn728, Asn845, Asn1030, Asn1044, Asn1091, and Asn1107 each carry an N-linked (GlcNAc...) asparagine glycan.

It belongs to the comF family.

Its subcellular location is the secreted. This chain is Protein rliB (rliB), found in Dictyostelium discoideum (Social amoeba).